Here is a 150-residue protein sequence, read N- to C-terminus: 6,7-dimethyl-8-ribityllumazine synthase (150 aa).

5-amino-6-(D-ribitylamino)uracil contacts are provided by residues Phe-11, 43-45, and 67-69; these read TYE and AVI. Residue 72-73 coordinates (2S)-2-hydroxy-3-oxobutyl phosphate; the sequence is AT. His-75 acts as the Proton donor in catalysis. A 5-amino-6-(D-ribitylamino)uracil-binding site is contributed by Leu-100. Arg-115 contributes to the (2S)-2-hydroxy-3-oxobutyl phosphate binding site.

The protein belongs to the DMRL synthase family.

It carries out the reaction (2S)-2-hydroxy-3-oxobutyl phosphate + 5-amino-6-(D-ribitylamino)uracil = 6,7-dimethyl-8-(1-D-ribityl)lumazine + phosphate + 2 H2O + H(+). It functions in the pathway cofactor biosynthesis; riboflavin biosynthesis; riboflavin from 2-hydroxy-3-oxobutyl phosphate and 5-amino-6-(D-ribitylamino)uracil: step 1/2. Functionally, catalyzes the formation of 6,7-dimethyl-8-ribityllumazine by condensation of 5-amino-6-(D-ribitylamino)uracil with 3,4-dihydroxy-2-butanone 4-phosphate. This is the penultimate step in the biosynthesis of riboflavin. This chain is 6,7-dimethyl-8-ribityllumazine synthase, found in Staphylothermus marinus (strain ATCC 43588 / DSM 3639 / JCM 9404 / F1).